A 1183-amino-acid chain; its full sequence is M-phase phosphoprotein 9 (1183 aa).

3 disordered regions span residues 28-52, 300-334, and 472-495; these read GLNLNTDRSSPHLSTNGVSSFSGKT, KLKQNQPKRAHVEDGGSRSKQGNEQSKKTPIEKSD, and ISFSPDSVLEPSMSSPSDIDSFSQ. The segment covering 324-334 has biased composition (basic and acidic residues); sequence QSKKTPIEKSD. The tract at residues 401–800 is required for its centrosomal localization; sequence TSNEMKLPSL…EAQVKQVEHE (400 aa). The segment at 451–500 is interaction with CEP97; that stretch reads KPKQQISGIQPHGLPNALDDRISFSPDSVLEPSMSSPSDIDSFSQASNVT. Residues 483–495 are compositionally biased toward low complexity; that stretch reads SMSSPSDIDSFSQ. Residues 609–804 are a coiled coil; the sequence is DLRAYYESEI…KQVEHENMLS (196 aa). The residue at position 781 (Ser781) is a Phosphoserine; by TTBK2. Lys784 is covalently cross-linked (Glycyl lysine isopeptide (Lys-Gly) (interchain with G-Cter in ubiquitin)). Phosphoserine; by TTBK2 is present on Ser788. Residues 801–1031 are interaction with KIF24; that stretch reads NMLSLRHNSR…PVSTLQRTNP (231 aa). Disordered stretches follow at residues 863 to 894 and 910 to 999; these read LGHRSPLEKDSSPGSSSTSLLIKKQRETSDTP and NWGT…GFSH. Over residues 921 to 936 the composition is skewed to polar residues; that stretch reads SNINPRQTETSVNASR. A compositionally biased stretch (low complexity) spans 949–967; the sequence is LNSASQRSSSLPPSNRKSS. At Ser994 the chain carries Phosphoserine. Positions 1109–1174 form a coiled coil; the sequence is RTLAETERFF…GSVRMTLKKF (66 aa).

Interacts with CCP110, CEP97 and KIF24. In terms of processing, TTBK2-mediated phosphorylation at Ser-781 and Ser-788, promotes its ubiquitination at Lys-784 leading to proteasomal degradation, loss of MPHOSPH9 facilitates the removal of the CP110-CEP97 complex from the mother centrioles, promoting the initiation of ciliogenesis. Phosphorylated in M (mitotic) phase. Post-translationally, ubiquitinated at Lys-784, leading to proteasomal degradation.

It localises to the cytoplasm. Its subcellular location is the cytoskeleton. It is found in the microtubule organizing center. The protein resides in the centrosome. The protein localises to the centriole. It localises to the golgi apparatus membrane. Functionally, negatively regulates cilia formation by recruiting the CP110-CEP97 complex (a negative regulator of ciliogenesis) at the distal end of the mother centriole in ciliary cells. At the beginning of cilia formation, MPHOSPH9 undergoes TTBK2-mediated phosphorylation and degradation via the ubiquitin-proteasome system and removes itself and the CP110-CEP97 complex from the distal end of the mother centriole, which subsequently promotes cilia formation. The polypeptide is M-phase phosphoprotein 9 (MPHOSPH9) (Homo sapiens (Human)).